The chain runs to 215 residues: Cytochrome b6 (215 aa).

The helical transmembrane segment at 32 to 52 (IFYCLGGITLTCFLVQVATGF) threads the bilayer. Cys-35 contacts heme c. Heme b is bound by residues His-86 and His-100. 3 helical membrane passes run 90–110 (ASMM…TGGF), 116–136 (LTWV…VTGY), and 186–206 (LHTF…FLMI). Heme b is bound by residues His-187 and His-202.

Belongs to the cytochrome b family. PetB subfamily. In terms of assembly, the 4 large subunits of the cytochrome b6-f complex are cytochrome b6, subunit IV (17 kDa polypeptide, PetD), cytochrome f and the Rieske protein, while the 4 small subunits are PetG, PetL, PetM and PetN. The complex functions as a dimer. It depends on heme b as a cofactor. Heme c serves as cofactor.

The protein resides in the plastid. The protein localises to the chloroplast thylakoid membrane. Component of the cytochrome b6-f complex, which mediates electron transfer between photosystem II (PSII) and photosystem I (PSI), cyclic electron flow around PSI, and state transitions. This chain is Cytochrome b6, found in Citrus sinensis (Sweet orange).